A 511-amino-acid chain; its full sequence is Sorting nexin MVP1 (511 aa).

The disordered stretch occupies residues 1–36 (MDNYEGSDPWNTSSNAWTKDDDHVVSTTNSEPSLNG). The segment covering 25-36 (VSTTNSEPSLNG) has biased composition (polar residues). One can recognise a PX domain in the interval 128 to 247 (DADIIIIEEI…TFLTVRTDLT (120 aa)). A 1,2-diacyl-sn-glycero-3-phospho-(1D-myo-inositol-3-phosphate) contacts are provided by Arg-172, Ser-174, Lys-198, and Arg-213.

It belongs to the sorting nexin family. Homodimer. Forms an autoinhibited tetramer consisting of 2 homodimers that self-interact, wherein the membrane-interacting BAR surfaces are sequestered and the PX lipid-binding sites are occluded. Interacts with VPS1.

It is found in the cytoplasm. The protein localises to the endosome membrane. Functionally, required for vacuolar protein sorting. Component of the retromer-mediated endosome-to-Golgi retrograde pathway. Required for efficient cargo export from the endosome, promoting VPS1-mediated fission of retromer-coated tubules that bud from the endosome. The protein is Sorting nexin MVP1 (MVP1) of Saccharomyces cerevisiae (strain ATCC 204508 / S288c) (Baker's yeast).